Here is a 171-residue protein sequence, read N- to C-terminus: Shikimate kinase (171 aa).

Glycine 14 to threonine 19 provides a ligand contact to ATP. Serine 18 is a binding site for Mg(2+). Substrate contacts are provided by aspartate 36, arginine 60, and glycine 82. Arginine 120 contributes to the ATP binding site. Arginine 139 lines the substrate pocket. Glutamine 156 is an ATP binding site.

Belongs to the shikimate kinase family. As to quaternary structure, monomer. It depends on Mg(2+) as a cofactor.

It is found in the cytoplasm. The catalysed reaction is shikimate + ATP = 3-phosphoshikimate + ADP + H(+). The protein operates within metabolic intermediate biosynthesis; chorismate biosynthesis; chorismate from D-erythrose 4-phosphate and phosphoenolpyruvate: step 5/7. Catalyzes the specific phosphorylation of the 3-hydroxyl group of shikimic acid using ATP as a cosubstrate. The chain is Shikimate kinase from Shewanella sp. (strain ANA-3).